The chain runs to 390 residues: MLKFEILATDTSSHARRGKLTLNHGVVQTPIFMPVGTYGTVKGVMPRSLREMGAQIILGNTFHLWMRPGLDVMQSFGGLHGFEQWDKPILTDSGGFQVWSLGSMRKITEEGVHFASPVNGDKLFMSPEVSMQIQTTLNSDIVMQLDECTPYETNGHKTTEAEARKSMEMSRRWAVRSKNEFERLGNPNALFGIVQGGMYKNLRQESLEALVEMDFPGYAVGGVSVGEPKDEMLDIMAHTPHRLPAHKPRYLMGVGTPEDLVEGVAQGVDMFDCVMPTRNARNGTLFTRYGDLKIRNARHKTDHQPLDPSCTCHACAGTEGVSWNDGGRGGFSRAYLHHLDRCGEMLGPMLTTIHNLHYYLNLMREVREALDAGQFGAFRARFKAERARGV.

Asp92 acts as the Proton acceptor in catalysis. Substrate is bound by residues Asp92–Phe96, Asp146, Gln195, and Gly222. The segment at Gly253–Asp259 is RNA binding. The active-site Nucleophile is the Asp272. Positions Thr277 to Arg281 are RNA binding; important for wobble base 34 recognition. 4 residues coordinate Zn(2+): Cys310, Cys312, Cys315, and His354.

Belongs to the queuine tRNA-ribosyltransferase family. Homodimer. Within each dimer, one monomer is responsible for RNA recognition and catalysis, while the other monomer binds to the replacement base PreQ1. The cofactor is Zn(2+).

It catalyses the reaction 7-aminomethyl-7-carbaguanine + guanosine(34) in tRNA = 7-aminomethyl-7-carbaguanosine(34) in tRNA + guanine. Its pathway is tRNA modification; tRNA-queuosine biosynthesis. Its function is as follows. Catalyzes the base-exchange of a guanine (G) residue with the queuine precursor 7-aminomethyl-7-deazaguanine (PreQ1) at position 34 (anticodon wobble position) in tRNAs with GU(N) anticodons (tRNA-Asp, -Asn, -His and -Tyr). Catalysis occurs through a double-displacement mechanism. The nucleophile active site attacks the C1' of nucleotide 34 to detach the guanine base from the RNA, forming a covalent enzyme-RNA intermediate. The proton acceptor active site deprotonates the incoming PreQ1, allowing a nucleophilic attack on the C1' of the ribose to form the product. After dissociation, two additional enzymatic reactions on the tRNA convert PreQ1 to queuine (Q), resulting in the hypermodified nucleoside queuosine (7-(((4,5-cis-dihydroxy-2-cyclopenten-1-yl)amino)methyl)-7-deazaguanosine). This chain is Queuine tRNA-ribosyltransferase, found in Acidovorax sp. (strain JS42).